Here is a 286-residue protein sequence, read N- to C-terminus: 3-hydroxybutyryl-CoA dehydrogenase (286 aa).

This sequence belongs to the 3-hydroxyacyl-CoA dehydrogenase family.

It catalyses the reaction 3-hydroxybutanoyl-CoA + NAD(+) = acetoacetyl-CoA + NADH + H(+). The catalysed reaction is (3S)-3-hydroxybutanoyl-CoA + NADP(+) = acetoacetyl-CoA + NADPH + H(+). The protein operates within lipid metabolism; butanoate metabolism. The protein is 3-hydroxybutyryl-CoA dehydrogenase (fadB2) of Mycobacterium tuberculosis (strain CDC 1551 / Oshkosh).